A 207-amino-acid chain; its full sequence is Protein GrpE (207 aa).

2 stretches are compositionally biased toward basic and acidic residues: residues 1–11 (MEENRDVKNEE) and 57–66 (DLVKNQEEEN). The tract at residues 1–66 (MEENRDVKNE…DLVKNQEEEN (66 aa)) is disordered.

The protein belongs to the GrpE family. As to quaternary structure, homodimer.

It is found in the cytoplasm. Participates actively in the response to hyperosmotic and heat shock by preventing the aggregation of stress-denatured proteins, in association with DnaK and GrpE. It is the nucleotide exchange factor for DnaK and may function as a thermosensor. Unfolded proteins bind initially to DnaJ; upon interaction with the DnaJ-bound protein, DnaK hydrolyzes its bound ATP, resulting in the formation of a stable complex. GrpE releases ADP from DnaK; ATP binding to DnaK triggers the release of the substrate protein, thus completing the reaction cycle. Several rounds of ATP-dependent interactions between DnaJ, DnaK and GrpE are required for fully efficient folding. The chain is Protein GrpE from Clostridium beijerinckii (strain ATCC 51743 / NCIMB 8052) (Clostridium acetobutylicum).